The primary structure comprises 379 residues: Cytochrome b (379 aa).

4 helical membrane-spanning segments follow: residues 34-54, 78-99, 114-134, and 179-199; these read FGSL…LLAM, WLIR…YLHI, WNTG…GYVL, and FFAL…IHLT. Residues H84 and H98 each contribute to the heme b site. 2 residues coordinate heme b: H183 and H197. H202 serves as a coordination point for a ubiquinone. A run of 4 helical transmembrane segments spans residues 227–247, 289–309, 321–341, and 348–368; these read LKDA…AFFS, LGGV…PFLH, LSQI…WIGS, and FIII…VLFP.

Belongs to the cytochrome b family. The cytochrome bc1 complex contains 11 subunits: 3 respiratory subunits (MT-CYB, CYC1 and UQCRFS1), 2 core proteins (UQCRC1 and UQCRC2) and 6 low-molecular weight proteins (UQCRH/QCR6, UQCRB/QCR7, UQCRQ/QCR8, UQCR10/QCR9, UQCR11/QCR10 and a cleavage product of UQCRFS1). This cytochrome bc1 complex then forms a dimer. Heme b serves as cofactor.

Its subcellular location is the mitochondrion inner membrane. Functionally, component of the ubiquinol-cytochrome c reductase complex (complex III or cytochrome b-c1 complex) that is part of the mitochondrial respiratory chain. The b-c1 complex mediates electron transfer from ubiquinol to cytochrome c. Contributes to the generation of a proton gradient across the mitochondrial membrane that is then used for ATP synthesis. The protein is Cytochrome b (MT-CYB) of Rhea americana (Greater rhea).